The chain runs to 582 residues: 5-aminolevulinate synthase, erythroid-specific, mitochondrial (582 aa).

R158 is a succinyl-CoA binding site. Pyridoxal 5'-phosphate contacts are provided by C253 and F254. Positions 275 and 294 each coordinate succinyl-CoA. 3 residues coordinate pyridoxal 5'-phosphate: S327, H355, and T383. The active site involves K386. Position 386 is an N6-(pyridoxal phosphate)lysine (K386). T415 and T416 together coordinate pyridoxal 5'-phosphate. Position 503 (T503) interacts with succinyl-CoA.

The protein belongs to the class-II pyridoxal-phosphate-dependent aminotransferase family. Homodimer. Pyridoxal 5'-phosphate serves as cofactor.

It is found in the mitochondrion inner membrane. It carries out the reaction succinyl-CoA + glycine + H(+) = 5-aminolevulinate + CO2 + CoA. It functions in the pathway porphyrin-containing compound metabolism; protoporphyrin-IX biosynthesis; 5-aminolevulinate from glycine: step 1/1. In terms of biological role, catalyzes the pyridoxal 5'-phosphate (PLP)-dependent condensation of succinyl-CoA and glycine to form aminolevulinic acid (ALA), with CoA and CO2 as by-products. Contributes significantly to heme formation during erythropoiesis. The polypeptide is 5-aminolevulinate synthase, erythroid-specific, mitochondrial (alas2) (Opsanus tau (Oyster toadfish)).